Reading from the N-terminus, the 83-residue chain is MVTIRLARGGSKKRPFYHLTVTNSRNARDGRFVERIGFFNPIAAGGEVRLSVDQERATYWLGQGAQPSERVAQLLKEAAKAAA.

Belongs to the bacterial ribosomal protein bS16 family.

The polypeptide is Small ribosomal subunit protein bS16 (Ectopseudomonas mendocina (strain ymp) (Pseudomonas mendocina)).